We begin with the raw amino-acid sequence, 137 residues long: uncharacterized protein (137 aa).

This is an uncharacterized protein from Mycobacterium tuberculosis (strain ATCC 25618 / H37Rv).